Reading from the N-terminus, the 367-residue chain is Glutamate 5-kinase (367 aa).

Lysine 17 is an ATP binding site. Residues serine 57, aspartate 144, and asparagine 156 each contribute to the substrate site. Residues 176-177 (SD) and 217-223 (TGGMTSK) each bind ATP. A PUA domain is found at 279 to 357 (AGALTLDEGA…SELPGELRRP (79 aa)).

Belongs to the glutamate 5-kinase family.

The protein localises to the cytoplasm. It catalyses the reaction L-glutamate + ATP = L-glutamyl 5-phosphate + ADP. It functions in the pathway amino-acid biosynthesis; L-proline biosynthesis; L-glutamate 5-semialdehyde from L-glutamate: step 1/2. Catalyzes the transfer of a phosphate group to glutamate to form L-glutamate 5-phosphate. This Mycolicibacterium paratuberculosis (strain ATCC BAA-968 / K-10) (Mycobacterium paratuberculosis) protein is Glutamate 5-kinase.